Consider the following 203-residue polypeptide: EF-hand calcium-binding domain-containing protein 8 (203 aa).

Residues 61–107 (SSEKPGESPKPQKMAQPGGSQKKETSRSVPVTDPTSHNSEINQRDQQ) form a disordered region. Over residues 87–107 (RSVPVTDPTSHNSEINQRDQQ) the composition is skewed to polar residues. EF-hand domains follow at residues 111 to 145 (MHLADLQKVFEKEADENGALKKEGFIRIMKGVLSS) and 146 to 181 (MSEEMLELLFLKVDSDCNGFVTWQKYVDYMMREFQG).

This Mus musculus (Mouse) protein is EF-hand calcium-binding domain-containing protein 8 (Efcab8).